Reading from the N-terminus, the 295-residue chain is MITELHGIDIRENEPLKHYTYTKVGGPADFLAFPRNRYELSRIVAYANKENMPWLVLGNASNLIVRDGGIRGFVIMFDKLNAVHLNGYTLEAEAGANLIETTKIAKFHSLTGFEFACGIPGSIGGAVFMNAGAYGGEISHIFLSAKVLTSSGEIKTISARDMAFGYRHSAIQETGDIVISAKFALKPGNYDTISQEMNRLNHLRQLKQPLEFPSCGSVFKRPPGHFAGQLIMEANLKGHRIGGVEVSEKHAGFMINVADGTAKDYEDLIAYVIETVENHSGVRLEPEVRIIGENL.

The 166-residue stretch at 23 to 188 (KVGGPADFLA…ISAKFALKPG (166 aa)) folds into the FAD-binding PCMH-type domain. The active site involves arginine 167. Residue serine 217 is the Proton donor of the active site. Residue glutamate 287 is part of the active site.

This sequence belongs to the MurB family. FAD serves as cofactor.

The protein localises to the cytoplasm. The catalysed reaction is UDP-N-acetyl-alpha-D-muramate + NADP(+) = UDP-N-acetyl-3-O-(1-carboxyvinyl)-alpha-D-glucosamine + NADPH + H(+). It functions in the pathway cell wall biogenesis; peptidoglycan biosynthesis. Functionally, cell wall formation. In Streptococcus pyogenes serotype M49 (strain NZ131), this protein is UDP-N-acetylenolpyruvoylglucosamine reductase.